Consider the following 355-residue polypeptide: 3-dehydroquinate synthase (355 aa).

Residues 71-76 (EGEASK), 105-109 (GVVGD), 129-130 (TS), Lys-142, and Lys-151 contribute to the NAD(+) site. Residues Glu-184, His-246, and His-263 each contribute to the Zn(2+) site.

This sequence belongs to the sugar phosphate cyclases superfamily. Dehydroquinate synthase family. Requires Co(2+) as cofactor. The cofactor is Zn(2+). NAD(+) is required as a cofactor.

The protein localises to the cytoplasm. The catalysed reaction is 7-phospho-2-dehydro-3-deoxy-D-arabino-heptonate = 3-dehydroquinate + phosphate. It functions in the pathway metabolic intermediate biosynthesis; chorismate biosynthesis; chorismate from D-erythrose 4-phosphate and phosphoenolpyruvate: step 2/7. Its function is as follows. Catalyzes the conversion of 3-deoxy-D-arabino-heptulosonate 7-phosphate (DAHP) to dehydroquinate (DHQ). This Streptococcus gordonii (strain Challis / ATCC 35105 / BCRC 15272 / CH1 / DL1 / V288) protein is 3-dehydroquinate synthase.